The following is a 178-amino-acid chain: Large ribosomal subunit protein uL6 (178 aa).

This sequence belongs to the universal ribosomal protein uL6 family. In terms of assembly, part of the 50S ribosomal subunit.

Functionally, this protein binds to the 23S rRNA, and is important in its secondary structure. It is located near the subunit interface in the base of the L7/L12 stalk, and near the tRNA binding site of the peptidyltransferase center. The sequence is that of Large ribosomal subunit protein uL6 from Desulfatibacillum aliphaticivorans.